A 303-amino-acid polypeptide reads, in one-letter code: MHIIMKTILATLCLILCASCCSKGACETRIKHTFSEKKFQKYSPVPKHPLSEQTHLYAKSCSIELEQTQLPTSTLTRYVSSTPTDSLSSKPLAAVYVLSHPLIQHKASLLRNKNTKSKIFRECLKEISLGVCYEATRDLALKNISIQTPLMQAECPHLTGTKIVVIPVLRAGLGMVDGFLALVPNAKVGLIGMSRNHETFQPSSYCCKLPEDIADCHVFIVDPMLATGGSASATIQLVKEHGAKNITLLNVLAVPEGIERIQKDHPDVTIYVASLDEKLNESAYILPGLGDAGDRLCGTSNPS.

The tract at residues 1 to 86 (MHIIMKTILA…RYVSSTPTDS (86 aa)) is unknown. Residues 87–303 (LSSKPLAAVY…DRLCGTSNPS (217 aa)) are UPRTase. 5-phospho-alpha-D-ribose 1-diphosphate-binding positions include arginine 170, arginine 195, and 222-230 (DPMLATGGS). Residues isoleucine 285 and 290-292 (GDA) contribute to the uracil site. Aspartate 291 contributes to the 5-phospho-alpha-D-ribose 1-diphosphate binding site.

The protein belongs to the UPRTase family. Mg(2+) is required as a cofactor.

It catalyses the reaction UMP + diphosphate = 5-phospho-alpha-D-ribose 1-diphosphate + uracil. Its pathway is pyrimidine metabolism; UMP biosynthesis via salvage pathway; UMP from uracil: step 1/1. With respect to regulation, allosterically activated by GTP. Its function is as follows. Catalyzes the conversion of uracil and 5-phospho-alpha-D-ribose 1-diphosphate (PRPP) to UMP and diphosphate. This Chlamydia muridarum (strain MoPn / Nigg) protein is Uracil phosphoribosyltransferase (upp).